Reading from the N-terminus, the 156-residue chain is UPF0587 protein (156 aa).

Zn(2+) is bound by residues C32, C35, C64, and C67.

Belongs to the UPF0587 family.

The sequence is that of UPF0587 protein from Dictyostelium discoideum (Social amoeba).